A 1481-amino-acid chain; its full sequence is Cystic fibrosis transmembrane conductance regulator (1481 aa).

Topologically, residues 1-77 (MQKSPLVKAS…KLINALRRCF (77 aa)) are cytoplasmic. A helical membrane pass occupies residues 78–98 (LWRFIFYGILLYLGEVTKAVQ). Positions 81–365 (FIFYGILLYL…GAVQTWYDSL (285 aa)) constitute an ABC transmembrane type-1 1 domain. The Extracellular segment spans residues 99-122 (PLLLGRIIASYDPDNKEERSIAIY). Residues 123 to 146 (LAIGLCLLFIVRTLLLHPAIFGLQ) traverse the membrane as a helical segment. The Cytoplasmic portion of the chain corresponds to 147 to 195 (HIGMQMRIAMFSLIYKKTLKLSSRVLDKISIGQLVSLLSNNLNKFDEGL). The chain crosses the membrane as a helical span at residues 196–216 (ALAHFVWIAPLQVTLLMGLLW). At 217–222 (DLLQAS) the chain is on the extracellular side. Residues 223–243 (AFCGLAVLIVLALFQAWLGKM) traverse the membrane as a helical segment. Over 244-298 (MMKYRDQRAGKINERLVITSEMIENIQSVKAYCWEEAMEKMIENLRQTELKLTRK) the chain is Cytoplasmic. The helical transmembrane segment at 299-319 (AAYMRYFNSAAFFFSGFFVVF) threads the bilayer. The Extracellular segment spans residues 320 to 339 (LSVLPYAFLQGIILRKIFTT). A helical membrane pass occupies residues 340-358 (ISFCIVLRMAITRQFPGAV). Residues 359-859 (QTWYDSLGAI…YLRYITVHKS (501 aa)) lie on the Cytoplasmic side of the membrane. ATP is bound by residues W401, S435, 459-466 (GSTGAGKT), and Q494. Residues 424-647 (NGDNKLFFSN…RPDFSSKLMG (224 aa)) enclose the ABC transporter 1 domain. Residue C525 is the site of S-palmitoyl cysteine attachment. Residue S550 is modified to Phosphoserine. Residues 655-832 (SAERRNSILT…EEINEEDLKE (178 aa)) are disordered R region. S661 and S671 each carry phosphoserine; by PKA. The residue at position 687 (S687) is a Phosphoserine; by PKC. A Glycyl lysine isopeptide (Lys-Gly) (interchain with G-Cter in ubiquitin) cross-link involves residue K689. Residues S701 and S713 each carry the phosphoserine; by PKA modification. Position 718 is a phosphothreonine (T718). S738, S769, S796, and S814 each carry phosphoserine; by PKA. The chain crosses the membrane as a helical span at residues 860 to 880 (LILVLIWCLIIFLAEVAASLV). In terms of domain architecture, ABC transmembrane type-1 2 spans 860–1156 (LILVLIWCLI…AVNSSIDVDS (297 aa)). At 881–919 (VLWLLKNNTPQQEMNSTQSGNRSYPVIITNTSFYYIFYI) the chain is on the extracellular side. N-linked (GlcNAc...) asparagine glycans are attached at residues N895 and N901. A discontinuously helical membrane pass occupies residues 920 to 940 (YVGVADTLLALGLFRGLPLVH). At 941 to 991 (TLITVSKILHHKMLRSVLQAPMSTLNALKAGGILNRFSKDIAILDDLLPLT) the chain is on the cytoplasmic side. A helical transmembrane segment spans residues 992–1012 (IFDFIQLLLIVIGAIAVVSVL). Residues 1013–1014 (QP) are Extracellular-facing. A helical transmembrane segment spans residues 1015 to 1035 (YIFLATVPVIAAFIMLRAYFL). Residues 1036-1096 (HTSQQLKQLE…TANWFLYLST (61 aa)) lie on the Cytoplasmic side of the membrane. A helical transmembrane segment spans residues 1097 to 1117 (LRWFQMRIEMIFVIFFIAVTF). Topologically, residues 1118–1131 (ISILTTGEGQGSVG) are extracellular. The chain crosses the membrane as a helical span at residues 1132-1152 (IILTLAMNIMSTLQWAVNSSI). Residues 1153–1481 (DVDSLMRSVS…TEEEVQETRL (329 aa)) lie on the Cytoplasmic side of the membrane. The region spanning 1211–1444 (MIVKDLTAKY…KSLFRQAISS (234 aa)) is the ABC transporter 2 domain. ATP contacts are provided by residues Y1220 and 1245 to 1252 (GRTGSGKS). An interaction with GORASP2 region spans residues 1387–1481 (RTIKQAFADC…TEEEVQETRL (95 aa)). A lipid anchor (S-palmitoyl cysteine) is attached at C1396. 2 positions are modified to phosphoserine: S1445 and S1457. Basic residues predominate over residues 1453 to 1462 (HRNSSKHKSR). The segment at 1453–1481 (HRNSSKHKSRSQITALKEETEEEVQETRL) is disordered. The segment covering 1471-1481 (ETEEEVQETRL) has biased composition (acidic residues). The PDZ-binding motif lies at 1479-1481 (TRL).

Belongs to the ABC transporter superfamily. ABCC family. CFTR transporter (TC 3.A.1.202) subfamily. In terms of assembly, monomer; does not require oligomerization for channel activity. May form oligomers in the membrane. Interacts with SLC26A3, SLC26A6 and NHERF1. Interacts with SHANK2. Interacts with MYO6. Interacts (via C-terminus) with GOPC (via PDZ domain); this promotes CFTR internalization and thereby decreases channel activity. Interacts with SLC4A7 through NHERF1. Found in a complex with MYO5B and RAB11A. Interacts with ANO1. Interacts with SLC26A8. Interacts with AHCYL1; the interaction increases CFTR activity. Interacts with CSE1L. The core-glycosylated form interacts with GORASP2 (via PDZ GRASP-type 1 domain) in respone to ER stress. Interacts with MARCHF2; the interaction leads to CFTR ubiqtuitination and degradation. Interacts with ADGRG2. N-glycosylated. In terms of processing, phosphorylated; cAMP treatment promotes phosphorylation and activates the channel. Dephosphorylation decreases the ATPase activity (in vitro). Phosphorylation at PKA sites activates the channel. Phosphorylation at PKC sites enhances the response to phosphorylation by PKA. Phosphorylated by AMPK; this inhibits channel activity. Post-translationally, ubiquitinated, leading to its degradation in the lysosome. Deubiquitination by USP10 in early endosomes enhances its endocytic recycling to the cell membrane. Ubiquitinated by RNF185 during ER stress. Ubiquitinated by MARCHF2.

It localises to the apical cell membrane. It is found in the early endosome membrane. Its subcellular location is the cell membrane. The protein resides in the recycling endosome membrane. The protein localises to the endoplasmic reticulum membrane. It localises to the nucleus. It carries out the reaction ATP + H2O + closed Cl(-) channel = ADP + phosphate + open Cl(-) channel.. The enzyme catalyses chloride(in) = chloride(out). The catalysed reaction is hydrogencarbonate(in) = hydrogencarbonate(out). It catalyses the reaction ATP + H2O = ADP + phosphate + H(+). Functionally, epithelial ion channel that plays an important role in the regulation of epithelial ion and water transport and fluid homeostasis. Mediates the transport of chloride ions across the cell membrane. Possesses an intrinsic ATPase activity and utilizes ATP to gate its channel; the passive flow of anions through the channel is gated by cycles of ATP binding and hydrolysis by the ATP-binding domains. The ion channel is also permeable to HCO(3)(-); selectivity depends on the extracellular chloride concentration. Exerts its function also by modulating the activity of other ion channels and transporters. Contributes to the regulation of the pH and the ion content of the epithelial fluid layer. Modulates the activity of the epithelial sodium channel (ENaC) complex, in part by regulating the cell surface expression of the ENaC complex. May regulate bicarbonate secretion and salvage in epithelial cells by regulating the transporter SLC4A7. Can inhibit the chloride channel activity of ANO1. Plays a role in the chloride and bicarbonate homeostasis during sperm epididymal maturation and capacitation. The polypeptide is Cystic fibrosis transmembrane conductance regulator (Cavia porcellus (Guinea pig)).